The following is a 131-amino-acid chain: ATP synthase epsilon chain (131 aa).

This sequence belongs to the ATPase epsilon chain family. As to quaternary structure, F-type ATPases have 2 components, CF(1) - the catalytic core - and CF(0) - the membrane proton channel. CF(1) has five subunits: alpha(3), beta(3), gamma(1), delta(1), epsilon(1). CF(0) has three main subunits: a, b and c.

It localises to the cell membrane. Its function is as follows. Produces ATP from ADP in the presence of a proton gradient across the membrane. The chain is ATP synthase epsilon chain from Bacillus pumilus (strain SAFR-032).